A 902-amino-acid chain; its full sequence is 3'-5' exonuclease DinG (902 aa).

The 154-residue stretch at 8 to 161 (VVDLETTGNQ…DEDATTTAKL (154 aa)) folds into the Exonuclease domain. The Helicase ATP-binding domain occupies 241 to 496 (KNVTQSLNLT…KAVDKLEQQR (256 aa)). 276–283 (APLGSGKS) serves as a coordination point for ATP. Residues 448 to 451 (DEAH) carry the DEAH box motif. The Helicase C-terminal domain occupies 714 to 883 (YIVEYITVTQ…HFKQRKGNIK (170 aa)).

This sequence belongs to the helicase family. DinG subfamily. Type 2 sub-subfamily.

Its function is as follows. 3'-5' exonuclease. This chain is 3'-5' exonuclease DinG, found in Staphylococcus epidermidis (strain ATCC 35984 / DSM 28319 / BCRC 17069 / CCUG 31568 / BM 3577 / RP62A).